Reading from the N-terminus, the 146-residue chain is Large ribosomal subunit protein bL19 (146 aa).

This sequence belongs to the bacterial ribosomal protein bL19 family.

This protein is located at the 30S-50S ribosomal subunit interface and may play a role in the structure and function of the aminoacyl-tRNA binding site. This is Large ribosomal subunit protein bL19 from Bartonella bacilliformis (strain ATCC 35685 / KC583 / Herrer 020/F12,63).